The chain runs to 327 residues: Poly(ribitol-phosphate) beta-N-acetylglucosaminyltransferase TarP (327 aa).

UDP-N-acetyl-alpha-D-glucosamine is bound by residues Pro-9, Asp-41, Asn-68, Arg-76, and 92–94; that span reads DSD. Asp-94 is a Mn(2+) binding site. Residue Asp-181 is the Proton acceptor of the active site.

It belongs to the glycosyltransferase 2 family. As to quaternary structure, homotrimer. The cofactor is Mn(2+).

It catalyses the reaction 4-O-[(D-ribitylphospho)(n)-di{(2R)-glycerylphospho}]-N-acetyl-beta-D-mannosaminyl-(1-&gt;4)-N-acetyl-alpha-D-glucosaminyl di-trans,octa-cis-undecaprenyl diphosphate + n UDP-N-acetyl-alpha-D-glucosamine = 4-O-([3-N-acetyl-beta-D-glucosaminyl-1-D-ribitylphospho](n)-di{[2R]-1-glycerylphospho})-N-acetyl-beta-D-mannosaminyl-(1-&gt;4)-N-acetyl-alpha-D-glucosaminyl di-trans,octa-cis-undecaprenyl diphosphate + n UDP + n H(+). It participates in cell wall biogenesis; poly(ribitol phosphate) teichoic acid biosynthesis. Its function is as follows. Attaches beta-O-GlcNAc (beta-O-N-acetyl-D-glucosamine) residues to the C3 position of poly(RboP)-wall teichoic acids (WTAs). Attenuates immunogenicity of WTA and protects S.aureus against adaptative host defenses by allowing bacteria to evade recognition by preexisting anti-S.aureus antibodies. Also protects the cell from podophage infection. The sequence is that of Poly(ribitol-phosphate) beta-N-acetylglucosaminyltransferase TarP from Staphylococcus aureus (strain N315).